A 213-amino-acid polypeptide reads, in one-letter code: Proteasome subunit beta 1 (213 aa).

Residues 1–18 (MVFIAVFNGVFAMSSLPG) constitute a propeptide, removed in mature form; by autocatalysis. Catalysis depends on threonine 19, which acts as the Nucleophile.

It belongs to the peptidase T1B family. As to quaternary structure, the 20S proteasome core is composed of 14 alpha and 14 beta subunits that assemble into four stacked heptameric rings, resulting in a barrel-shaped structure. The two inner rings, each composed of seven catalytic beta subunits, are sandwiched by two outer rings, each composed of seven alpha subunits. The catalytic chamber with the active sites is on the inside of the barrel. Has a gated structure, the ends of the cylinder being occluded by the N-termini of the alpha-subunits. Is capped at one or both ends by the proteasome regulatory ATPase, PAN.

It is found in the cytoplasm. It catalyses the reaction Cleavage of peptide bonds with very broad specificity.. With respect to regulation, the formation of the proteasomal ATPase PAN-20S proteasome complex, via the docking of the C-termini of PAN into the intersubunit pockets in the alpha-rings, triggers opening of the gate for substrate entry. Interconversion between the open-gate and close-gate conformations leads to a dynamic regulation of the 20S proteasome proteolysis activity. Functionally, component of the proteasome core, a large protease complex with broad specificity involved in protein degradation. The protein is Proteasome subunit beta 1 of Staphylothermus marinus (strain ATCC 43588 / DSM 3639 / JCM 9404 / F1).